A 57-amino-acid polypeptide reads, in one-letter code: Large ribosomal subunit protein bL32 (57 aa).

The tract at residues 1–25 (MATPSNKNSKSHKRNRRGHIGLNVP) is disordered. The span at 9–19 (SKSHKRNRRGH) shows a compositional bias: basic residues.

Belongs to the bacterial ribosomal protein bL32 family.

The polypeptide is Large ribosomal subunit protein bL32 (Leuconostoc mesenteroides subsp. mesenteroides (strain ATCC 8293 / DSM 20343 / BCRC 11652 / CCM 1803 / JCM 6124 / NCDO 523 / NBRC 100496 / NCIMB 8023 / NCTC 12954 / NRRL B-1118 / 37Y)).